Consider the following 726-residue polypeptide: Probable cadmium-transporting ATPase (726 aa).

One can recognise an HMA domain in the interval Asp11 to Phe74. Cys22 and Cys25 together coordinate Cd(2+). 5 consecutive transmembrane segments (helical) span residues Ser105 to Gly125, Leu129 to Val149, Thr163 to Ala179, Ile335 to Trp355, and Leu363 to Val383. Asp414 (4-aspartylphosphate intermediate) is an active-site residue. Helical transmembrane passes span Leu671–Ile693 and Thr698–Leu720.

This sequence belongs to the cation transport ATPase (P-type) (TC 3.A.3) family. Type IB subfamily.

The protein localises to the cell membrane. It carries out the reaction Cd(2+)(in) + ATP + H2O = Cd(2+)(out) + ADP + phosphate + H(+). Couples the hydrolysis of ATP with the export of cadmium. In Staphylococcus aureus (strain MRSA252), this protein is Probable cadmium-transporting ATPase (cadA).